Consider the following 709-residue polypeptide: Polyribonucleotide nucleotidyltransferase (709 aa).

Positions 490 and 496 each coordinate Mg(2+). Positions 557-616 constitute a KH domain; the sequence is PKVITMRVLPEKIPVIIGPSGKNIKKIIDETGVKIDLDQEGLVRIYAVDGESADKAKEMI. The S1 motif domain maps to 626-694; it reads GEVYMGKVTR…EMGRAKVSLK (69 aa).

This sequence belongs to the polyribonucleotide nucleotidyltransferase family. The cofactor is Mg(2+).

It localises to the cytoplasm. The enzyme catalyses RNA(n+1) + phosphate = RNA(n) + a ribonucleoside 5'-diphosphate. Its function is as follows. Involved in mRNA degradation. Catalyzes the phosphorolysis of single-stranded polyribonucleotides processively in the 3'- to 5'-direction. This chain is Polyribonucleotide nucleotidyltransferase, found in Persephonella marina (strain DSM 14350 / EX-H1).